The sequence spans 351 residues: Dihydroorotate dehydrogenase (quinone) (351 aa).

FMN contacts are provided by residues 61 to 65 (AGLDK) and Thr-85. Lys-65 contributes to the substrate binding site. A substrate-binding site is contributed by 110–114 (NRMGF). Asn-139 and Asn-172 together coordinate FMN. Asn-172 is a substrate binding site. The active-site Nucleophile is Ser-175. Residue Asn-177 participates in substrate binding. FMN is bound by residues Lys-217 and Thr-245. 246–247 (NT) is a substrate binding site. FMN-binding positions include Gly-268, Gly-297, and 318 to 319 (YS).

Belongs to the dihydroorotate dehydrogenase family. Type 2 subfamily. In terms of assembly, monomer. The cofactor is FMN.

The protein localises to the cell membrane. The enzyme catalyses (S)-dihydroorotate + a quinone = orotate + a quinol. It functions in the pathway pyrimidine metabolism; UMP biosynthesis via de novo pathway; orotate from (S)-dihydroorotate (quinone route): step 1/1. Functionally, catalyzes the conversion of dihydroorotate to orotate with quinone as electron acceptor. In Xanthomonas campestris pv. campestris (strain 8004), this protein is Dihydroorotate dehydrogenase (quinone).